The chain runs to 627 residues: Myelin-associated glycoprotein (627 aa).

The first 19 residues, 1–19 (MIFLATLPLFWIMISASRG), serve as a signal peptide directing secretion. An interaction with RTN4R and RTN4RL2 region spans residues 20–325 (GHWGAWMPST…RTVELSVMYA (306 aa)). Topologically, residues 20–516 (GHWGAWMPST…HRLMWAKIGP (497 aa)) are extracellular. Residue Trp22 is glycosylated (C-linked (Man) tryptophan). One can recognise an Ig-like V-type domain in the interval 22-120 (WGAWMPSTIS…LGGKYYFRGD (99 aa)). 3 disulfide bridges follow: Cys37–Cys165, Cys42–Cys100, and Cys159–Cys217. 65–67 (YPK) serves as a coordination point for a ganglioside GT1b (d18:1(4E)). A glycan (N-linked (GlcNAc...) asparagine) is linked at Asn99. A ganglioside GT1b (d18:1(4E)) is bound by residues Arg118 and 124-128 (YNQYT). 4 Ig-like C2-type domains span residues 139 to 237 (NTPN…LDVK), 241 to 325 (VIVE…VMYA), 327 to 412 (WKPT…VEFA), and 413 to 508 (PIIL…GAHR). Residues Asn223 and Asn246 are each glycosylated (N-linked (GlcNAc...) asparagine). Cys261 and Cys305 form a disulfide bridge. N-linked (GlcNAc...) asparagine glycosylation is found at Asn315 and Asn332. Cys347 and Cys392 are joined by a disulfide. Asn406 carries an N-linked (GlcNAc...) asparagine glycan. 2 disulfide bridges follow: Cys421/Cys430 and Cys432/Cys488. 2 N-linked (GlcNAc...) asparagine glycosylation sites follow: Asn450 and Asn454. The chain crosses the membrane as a helical span at residues 517–536 (VGAVVAFAILIAIVCYITQT). A lipid anchor (S-palmitoyl cysteine) is attached at Cys531. Topologically, residues 537–627 (RRKKNVTESS…LAEYAEIRVK (91 aa)) are cytoplasmic. Ser545, Ser547, Ser549, and Ser591 each carry phosphoserine. The segment at 578–627 (LGSERRLLGLRGESPELDLSYSHSDLGKRPTKDSYTLTEELAEYAEIRVK) is required for normal axon myelination in the central nervous system.

Belongs to the immunoglobulin superfamily. SIGLEC (sialic acid binding Ig-like lectin) family. As to quaternary structure, monomer and homodimer. Interacts (via the first three N-terminal Ig-like domains) with RTN4R and RTN4RL2. Interacts with isoform 2 of BSG. In terms of processing, N-glycosylated. Phosphorylated on tyrosine residues. Post-translationally, ubiquitinated, leading to proteasomal degradation. In terms of tissue distribution, detected in the myelin tract in brain, especially in the corpus callosum and in peripheral nerve. Expressed by myelinating glial cells in the central and peripheral nervous system. Detected in oligodendrocyte processes before formation of compact myelin. Restricted to the periaxonal space after myelination. Isoform S-MAG is the predominant isoform in CNS and PNS of the adult (at protein level).

The protein resides in the cell membrane. It localises to the membrane raft. Adhesion molecule that mediates interactions between myelinating cells and neurons by binding to neuronal sialic acid-containing gangliosides and to the glycoproteins RTN4R and RTN4RL2. Not required for initial myelination, but seems to play a role in the maintenance of normal axon myelination. Protects motoneurons against apoptosis, also after injury; protection against apoptosis is probably mediated via interaction with neuronal RTN4R and RTN4RL2. Required to prevent degeneration of myelinated axons in adults; this probably depends on binding to gangliosides on the axon cell membrane. Negative regulator of neurite outgrowth that inhibits axon longitudinal growth. Negative regulator of neurite outgrowth; in dorsal root ganglion neurons the inhibition is mediated primarily via binding to neuronal RTN4R or RTN4RL2 and to a lesser degree via binding to neuronal gangliosides. In cerebellar granule cells the inhibition is mediated via binding to neuronal gangliosides. In sensory neurons, inhibition of neurite extension depends only partially on RTN4R, RTN4RL2 and gangliosides. Inhibits axon outgrowth by binding to RTN4R. Preferentially binds to alpha-2,3-linked sialic acid. Binds ganglioside Gt1b. The polypeptide is Myelin-associated glycoprotein (Mag) (Mus musculus (Mouse)).